The sequence spans 88 residues: Large ribosomal subunit protein eL37 (88 aa).

A disordered region spans residues 1-24 (MTKGTTSFGKRHNKSHTQCRRCGR). The segment covering 9–24 (GKRHNKSHTQCRRCGR) has biased composition (basic residues). Positions 19, 22, 34, and 37 each coordinate Zn(2+). The C4-type zinc finger occupies 19–37 (CRRCGRKSYHIQKKTCSSC).

Belongs to the eukaryotic ribosomal protein eL37 family. Zn(2+) is required as a cofactor.

Functionally, binds to the 23S rRNA. The chain is Large ribosomal subunit protein eL37 (RPL37) from Schistosoma mansoni (Blood fluke).